The primary structure comprises 173 residues: Crossover junction endodeoxyribonuclease RuvC (173 aa).

Catalysis depends on residues Asp-8, Glu-67, and Asp-139. Mg(2+) is bound by residues Asp-8, Glu-67, and Asp-139.

This sequence belongs to the RuvC family. As to quaternary structure, homodimer which binds Holliday junction (HJ) DNA. The HJ becomes 2-fold symmetrical on binding to RuvC with unstacked arms; it has a different conformation from HJ DNA in complex with RuvA. In the full resolvosome a probable DNA-RuvA(4)-RuvB(12)-RuvC(2) complex forms which resolves the HJ. Mg(2+) is required as a cofactor.

The protein localises to the cytoplasm. The enzyme catalyses Endonucleolytic cleavage at a junction such as a reciprocal single-stranded crossover between two homologous DNA duplexes (Holliday junction).. Its function is as follows. The RuvA-RuvB-RuvC complex processes Holliday junction (HJ) DNA during genetic recombination and DNA repair. Endonuclease that resolves HJ intermediates. Cleaves cruciform DNA by making single-stranded nicks across the HJ at symmetrical positions within the homologous arms, yielding a 5'-phosphate and a 3'-hydroxyl group; requires a central core of homology in the junction. The consensus cleavage sequence is 5'-(A/T)TT(C/G)-3'. Cleavage occurs on the 3'-side of the TT dinucleotide at the point of strand exchange. HJ branch migration catalyzed by RuvA-RuvB allows RuvC to scan DNA until it finds its consensus sequence, where it cleaves and resolves the cruciform DNA. The sequence is that of Crossover junction endodeoxyribonuclease RuvC from Proteus mirabilis (strain HI4320).